The chain runs to 108 residues: MPESDTRTIHHVDAHVGQRVRQRRTALILDQETLARRIGVSFQQIQKYERGRNRISASRLYDIAKALAVPIDYFFSDLERGDPRHDGLWPRTWGAWPKAGAPRPIRCA.

Residues 20 to 74 enclose the HTH cro/C1-type domain; that stretch reads VRQRRTALILDQETLARRIGVSFQQIQKYERGRNRISASRLYDIAKALAVPIDYF. Residues 31–50 constitute a DNA-binding region (H-T-H motif); the sequence is QETLARRIGVSFQQIQKYER.

This is an uncharacterized protein from Rhodospirillum rubrum.